Consider the following 300-residue polypeptide: Junctional adhesion molecule A (300 aa).

The first 26 residues, 1–26, serve as a signal peptide directing secretion; sequence MGTEGKAGSKLLFLFTSMILGSLVQG. Residues 27–238 are Extracellular-facing; it reads KGSVYSPQTA…MEAVELNVGG (212 aa). Ig-like V-type domains are found at residues 28-122 and 134-228; these read GSVY…GEVS and PTVS…EAVR. Cystine bridges form between C49–C108 and C152–C212. Residue N185 is glycosylated (N-linked (GlcNAc...) asparagine). The chain crosses the membrane as a helical span at residues 239–259; sequence IVAAVLVTLILLGLLIFGIWF. Residues 260–300 lie on the Cytoplasmic side of the membrane; the sequence is AYSRGYFERTKKGTAPGKKVIYSQPSARSEGEFKQTSSFLV. A phosphoserine mark is found at S282, S285, and S288.

Belongs to the immunoglobulin superfamily. Interacts with the ninth PDZ domain of MPDZ. Interacts with the first PDZ domain of PARD3. The association between PARD3 and PARD6B probably disrupts this interaction. Interacts with ITGAL (via I-domain). Interacts with CD151. Post-translationally, N-glycosylated.

It localises to the cell junction. Its subcellular location is the tight junction. It is found in the cell membrane. Seems to play a role in epithelial tight junction formation. Appears early in primordial forms of cell junctions and recruits PARD3. The association of the PARD6-PARD3 complex may prevent the interaction of PARD3 with JAM1, thereby preventing tight junction assembly. Plays a role in regulating monocyte transmigration involved in integrity of epithelial barrier. Ligand for integrin alpha-L/beta-2 involved in memory T-cell and neutrophil transmigration. The sequence is that of Junctional adhesion molecule A (F11r) from Rattus norvegicus (Rat).